A 132-amino-acid polypeptide reads, in one-letter code: Large ribosomal subunit protein uL14 (132 aa).

Belongs to the universal ribosomal protein uL14 family. Part of the 50S ribosomal subunit. Forms a cluster with proteins L3 and L24e, part of which may contact the 16S rRNA in 2 intersubunit bridges.

Its function is as follows. Binds to 23S rRNA. Forms part of two intersubunit bridges in the 70S ribosome. The protein is Large ribosomal subunit protein uL14 of Methanosarcina barkeri (strain Fusaro / DSM 804).